The following is a 508-amino-acid chain: ATP synthase subunit alpha, chloroplastic (508 aa).

Glycine 170–threonine 177 is an ATP binding site.

This sequence belongs to the ATPase alpha/beta chains family. As to quaternary structure, F-type ATPases have 2 components, F(1) - the catalytic core - and F(0) - the membrane proton channel. F(1) has five subunits: alpha(3), beta(3), gamma(1), delta(1), epsilon(1). F(0) has four main subunits: a(1), b(1), b'(1) and c(10-14). The alpha and beta chains form an alternating ring which encloses part of the gamma chain. F(1) is attached to F(0) by a central stalk formed by the gamma and epsilon chains, while a peripheral stalk is formed by the delta, b and b' chains.

It is found in the plastid. It localises to the chloroplast thylakoid membrane. The enzyme catalyses ATP + H2O + 4 H(+)(in) = ADP + phosphate + 5 H(+)(out). In terms of biological role, f(1)F(0) ATP synthase produces ATP from ADP in the presence of a proton or sodium gradient. F-type ATPases consist of two structural domains, F(1) containing the extramembraneous catalytic core and F(0) containing the membrane proton channel, linked together by a central stalk and a peripheral stalk. During catalysis, ATP synthesis in the catalytic domain of F(1) is coupled via a rotary mechanism of the central stalk subunits to proton translocation. The alpha chain is a regulatory subunit. The sequence is that of ATP synthase subunit alpha, chloroplastic from Chlamydomonas reinhardtii (Chlamydomonas smithii).